We begin with the raw amino-acid sequence, 97 residues long: MKSLLLGAIWLYQKVLSPWIGNQCRFYPTCSEYARQAVETHGSLRGSALAAKRLCKCHPWHPGGFDYVPGAVPGAEPDQEQHQCTPLCNHHSEDHSQ.

Positions 72 to 97 (VPGAEPDQEQHQCTPLCNHHSEDHSQ) are disordered.

Belongs to the UPF0161 family.

It is found in the cell inner membrane. Functionally, could be involved in insertion of integral membrane proteins into the membrane. In Alcanivorax borkumensis (strain ATCC 700651 / DSM 11573 / NCIMB 13689 / SK2), this protein is Putative membrane protein insertion efficiency factor.